A 251-amino-acid polypeptide reads, in one-letter code: 7-cyano-7-deazaguanine synthase (251 aa).

Residues 1 to 21 (MSDLPRHSPRRQHAGESAVTA) are disordered. Position 35 to 45 (35 to 45 (YSGGMDSYTVL)) interacts with ATP. Cys-212, Cys-220, Cys-223, and Cys-226 together coordinate Zn(2+).

This sequence belongs to the QueC family. Zn(2+) serves as cofactor.

The catalysed reaction is 7-carboxy-7-deazaguanine + NH4(+) + ATP = 7-cyano-7-deazaguanine + ADP + phosphate + H2O + H(+). It participates in purine metabolism; 7-cyano-7-deazaguanine biosynthesis. Catalyzes the ATP-dependent conversion of 7-carboxy-7-deazaguanine (CDG) to 7-cyano-7-deazaguanine (preQ(0)). This is 7-cyano-7-deazaguanine synthase from Chromohalobacter salexigens (strain ATCC BAA-138 / DSM 3043 / CIP 106854 / NCIMB 13768 / 1H11).